We begin with the raw amino-acid sequence, 403 residues long: Heptahelical transmembrane protein ADIPOR3 (403 aa).

The Cytoplasmic segment spans residues 1–73; it reads MAAAAGEEVE…LSAFSIHNET (73 aa). Residues 74-94 form a helical membrane-spanning segment; the sequence is LNVWTHLIGFFIFLVLTIYTA. The Extracellular portion of the chain corresponds to 95–209; sequence TQVPNVVDLQ…QLIRPIPRWP (115 aa). A helical transmembrane segment spans residues 210–230; the sequence is FYAFLGGAMFCLLASSTCHLL. The Cytoplasmic portion of the chain corresponds to 231–246; that stretch reads SCHSRRLAYIMLRLDY. The helical transmembrane segment at 247–267 threads the bilayer; sequence AGIAALIATSFYPPVYYSFMC. At 268–274 the chain is on the extracellular side; sequence YPFFCNL. Residues 275 to 295 form a helical membrane-spanning segment; the sequence is YLSCITILGVATIAFSLLPVF. Over 296-306 the chain is Cytoplasmic; that stretch reads QNPEFRTIRAC. A helical transmembrane segment spans residues 307–327; that stretch reads LFFGMGASGVIPVIHKLILFW. At 328–331 the chain is on the extracellular side; the sequence is HQPE. The helical transmembrane segment at 332 to 352 threads the bilayer; it reads ALHTTAYEVLMGLFYGIGALV. The Cytoplasmic portion of the chain corresponds to 353-374; sequence YATRVPERWMPGKFDIAGHSHQ. A helical membrane pass occupies residues 375-395; that stretch reads LFHVLVVAGAYTHYHSGLVYL. Residues 396-403 are Extracellular-facing; the sequence is KWRDVQGC.

Belongs to the ADIPOR family.

It is found in the membrane. In terms of biological role, may play a role in abiotic stress response. The sequence is that of Heptahelical transmembrane protein ADIPOR3 (ADIPOR3) from Oryza sativa subsp. japonica (Rice).